The chain runs to 232 residues: UPF0758 protein FN0909 (232 aa).

One can recognise an MPN domain in the interval 110-232 (KISNKDILLK…YFSFLEEGLI (123 aa)). Residues His-181, His-183, and Asp-194 each coordinate Zn(2+). The JAMM motif motif lies at 181-194 (HNHPSDNITPSKSD).

This sequence belongs to the UPF0758 family.

This Fusobacterium nucleatum subsp. nucleatum (strain ATCC 25586 / DSM 15643 / BCRC 10681 / CIP 101130 / JCM 8532 / KCTC 2640 / LMG 13131 / VPI 4355) protein is UPF0758 protein FN0909.